Reading from the N-terminus, the 544-residue chain is Pentatricopeptide repeat-containing protein At1g66345, mitochondrial (544 aa).

The transit peptide at 1–116 (MASALRRLVE…RNLRHGIKSY (116 aa)) directs the protein to the mitochondrion. PPR repeat units follow at residues 163-197 (TPLVFDLLVQCYAKIRYLELGFDVFKRLCDCGFTL), 198-232 (SVITLNTLIHYSSKSKIDDLVWRIYECAIDKRIYP), 233-267 (NEITIRIMIQVLCKEGRLKEVVDLLDRICGKRCLP), 268-302 (SVIVNTSLVFRVLEEMRIEESMSLLKRLLMKNMVV), 303-337 (DTIGYSIVVYAKAKEGDLVSARKVFDEMLQRGFSA), 338-372 (NSFVYTVFVRVCCEKGDVKEAERLLSEMEESGVSP), 373-407 (YDETFNCLIGGFARFGWEEKGLEYCEVMVTRGLMP), 408-442 (SCSAFNEMVKSVSKIENVNRANEILTKSIDKGFVP), 443-477 (DEHTYSHLIRGFIEGNDIDQALKLFYEMEYRKMSP), 478-512 (GFEVFRSLIVGLCTCGKVEAGEKYLKIMKKRLIEP), and 513-544 (NADIYDALIKAFQKIGDKTNADRVYNEMISVR).

The protein belongs to the PPR family. P subfamily.

The protein resides in the mitochondrion. This chain is Pentatricopeptide repeat-containing protein At1g66345, mitochondrial, found in Arabidopsis thaliana (Mouse-ear cress).